The chain runs to 449 residues: MLKPPVDAPIDVKDWIDNRPIAAYQWLILVLCFLIVLFDGFDVAVMGFIAPSLMQDWGLSRAAFGPVMSAGMVGLAIGALTAGPYADRLGRKKVLLIAVSGFSLLSLACAFARNPYELAVLRLLTGIALGAAMPNCTTLLAEYLPTRNRSLMITIMFTGFNMGSGLGGFLSAWLIPHHGWKSVLLAGGLLPLALLPLLWWLLPESARFLAARQAPASQIAAALAKLGGRFAAGTRFTVSEPTTQHKAPARQLFSERYRFGTLALWLTYFMGLLVIYLTMGWLPTLLRDGGLSIERAATITGLFQIGGAVGAIVVGWIMDRRNPNRVIAIAYALGGLCIVSLGALSLESSLLVVGVAAAGFCMSGAQTALNAFAPGYYPTEFRATGVSWMLGIGRFGAIFGSLIGGAVLSLGLGLPLLFTLLGLPAFAAALAILANGHARLRATPAVTAP.

The next 12 membrane-spanning stretches (helical) occupy residues 26-46 (WLIL…VAVM), 62-82 (AAFG…ALTA), 92-112 (KKVL…CAFA), 123-143 (LLTG…LAEY), 155-175 (IMFT…AWLI), 183-203 (VLLA…WLLP), 262-282 (LALW…MGWL), 298-318 (TITG…GWIM), 326-346 (VIAI…ALSL), 349-369 (SLLV…QTAL), 388-408 (WMLG…GAVL), and 414-434 (LPLL…AILA).

Belongs to the major facilitator superfamily. Sugar transporter (TC 2.A.1.1) family.

It is found in the membrane. In terms of biological role, transporter that specifically mediates the uptake of gallate. This chain is Gallate transporter (galT), found in Pseudomonas putida (Arthrobacter siderocapsulatus).